We begin with the raw amino-acid sequence, 315 residues long: Malate dehydrogenase (315 aa).

Residues 10–15 (GAGNVG) and aspartate 34 each bind NAD(+). Substrate-binding residues include arginine 85 and arginine 91. Residues asparagine 98 and 121–123 (VSN) each bind NAD(+). Substrate-binding residues include asparagine 123 and arginine 154. The Proton acceptor role is filled by histidine 178.

It belongs to the LDH/MDH superfamily. MDH type 3 family.

The catalysed reaction is (S)-malate + NAD(+) = oxaloacetate + NADH + H(+). Catalyzes the reversible oxidation of malate to oxaloacetate. This Rhodopirellula baltica (strain DSM 10527 / NCIMB 13988 / SH1) protein is Malate dehydrogenase.